The primary structure comprises 813 residues: Acyl-homoserine lactone acylase QuiP (813 aa).

A signal peptide spans 1–26 (MAAPAFPPFRLRFATAATLLGMLGLA). Ser-262 acts as the Nucleophile in catalysis.

It belongs to the peptidase S45 family. In terms of assembly, heterodimer of an alpha subunit and a beta subunit processed from the same precursor.

The protein resides in the periplasm. It catalyses the reaction an N-acyl-L-homoserine lactone + H2O = L-homoserine lactone + a carboxylate. Catalyzes the deacylation of acyl-homoserine lactone (AHL or acyl-HSL), releasing homoserine lactone (HSL) and the corresponding fatty acid. Possesses a specificity for the degradation of long-chain acyl-HSLs (side chains of seven or more carbons in length). This chain is Acyl-homoserine lactone acylase QuiP (quiP), found in Pseudomonas putida (strain ATCC 47054 / DSM 6125 / CFBP 8728 / NCIMB 11950 / KT2440).